Consider the following 471-residue polypeptide: Putative multidrug resistance protein MdtD (471 aa).

Residues 1–11 (MTDLPDSTRWQ) lie on the Periplasmic side of the membrane. The helical transmembrane segment at 12-32 (LWIVAFGFFMQSLDTTIVNTA) threads the bilayer. Residues 33–48 (LPSMAQSLGESPLHMH) lie on the Cytoplasmic side of the membrane. The chain crosses the membrane as a helical span at residues 49–69 (MVIVSYVLTVAVMLPASGWLA). Over 70-76 (DKVGVRN) the chain is Periplasmic. The chain crosses the membrane as a helical span at residues 77-97 (IFFTAIVLFTLGSLFCALSGT). Over 98–101 (LNEL) the chain is Cytoplasmic. A helical membrane pass occupies residues 102-124 (LLARALQGVGGAMMVPVGRLTVM). The Periplasmic segment spans residues 125-137 (KIVPREQYMAAMT). Residues 138–158 (FVTLPGQVGPLLGPALGGLLV) traverse the membrane as a helical segment. Residues 159–164 (EYASWH) lie on the Cytoplasmic side of the membrane. Residues 165-185 (WIFLINIPVGIIGAIATLMLM) form a helical membrane-spanning segment. The Periplasmic portion of the chain corresponds to 186–196 (PNYTMQTRRFD). A helical transmembrane segment spans residues 197 to 217 (LSGFLLLAVGMAVLTLALDGS). Residues 218-224 (KGTGFSP) lie on the Cytoplasmic side of the membrane. The helical transmembrane segment at 225 to 245 (LAIAGLVAVGVVALVLYLLHA) threads the bilayer. Topologically, residues 246–262 (QNNNRALFSLKLFRTRT) are periplasmic. The chain crosses the membrane as a helical span at residues 263–283 (FSLGLAGSFAGRIGSGMLPFM). The Cytoplasmic segment spans residues 284-285 (TP). Residues 286 to 306 (VFLQIGLGFSPFHAGLMMIPM) traverse the membrane as a helical segment. Topologically, residues 307-341 (VLGSMGMKRIVVQVVNRFGYRRVLVATTLGLSLVT) are periplasmic. A helical membrane pass occupies residues 342 to 362 (LLFMTTALLGWYYVLPFVLFL). Topologically, residues 363 to 395 (QGMVNSTRFSSMNTLTLKDLPDNLASSGNSLLS) are cytoplasmic. A helical transmembrane segment spans residues 396 to 416 (MIMQLSMSIGVTIAGLLLGLF). The Periplasmic portion of the chain corresponds to 417-430 (GSQHVSVDSGTTQT). The helical transmembrane segment at 431 to 451 (VFMYTWLSMAFIIALPAFVFA) threads the bilayer. The Cytoplasmic segment spans residues 452 to 471 (RVPSDTHQNVAISRRKRSAQ).

It belongs to the major facilitator superfamily. TCR/Tet family.

The protein resides in the cell inner membrane. This chain is Putative multidrug resistance protein MdtD, found in Escherichia coli O45:K1 (strain S88 / ExPEC).